The primary structure comprises 395 residues: Acetate kinase (395 aa).

Residue N8 coordinates Mg(2+). K15 contacts ATP. R89 lines the substrate pocket. The Proton donor/acceptor role is filled by D146. Residues 206-210 (HLGNG), 281-283 (DLR), and 329-333 (GIGEN) contribute to the ATP site. E382 is a binding site for Mg(2+).

This sequence belongs to the acetokinase family. In terms of assembly, homodimer. The cofactor is Mg(2+). Requires Mn(2+) as cofactor.

The protein localises to the cytoplasm. The enzyme catalyses acetate + ATP = acetyl phosphate + ADP. The protein operates within metabolic intermediate biosynthesis; acetyl-CoA biosynthesis; acetyl-CoA from acetate: step 1/2. With respect to regulation, induced by glucose excess, the induction may be mediated by CcpA transcriptional regulator. Catalyzes the formation of acetyl phosphate from acetate and ATP. Can also catalyze the reverse reaction. Appears to favor the formation of acetate. Involved in the secretion of excess carbohydrate. The protein is Acetate kinase of Bacillus subtilis (strain 168).